The sequence spans 88 residues: UPF0223 protein YktA (88 aa).

The protein belongs to the UPF0223 family.

The protein is UPF0223 protein YktA (yktA) of Bacillus subtilis (strain 168).